The sequence spans 243 residues: Protein Thf1 (243 aa).

Residues 180 to 224 (SKARVEKDLNLYKSNLEKMAQAVELTEQILESERRKREQNESAKL) adopt a coiled-coil conformation. A compositionally biased stretch (basic and acidic residues) spans 210–220 (ESERRKREQNE). The disordered stretch occupies residues 210–243 (ESERRKREQNESAKLNTGSSEQMSQGVEACSNIS). Residues 221 to 243 (SAKLNTGSSEQMSQGVEACSNIS) are compositionally biased toward polar residues.

This sequence belongs to the THF1 family.

May be involved in photosynthetic membrane biogenesis. The sequence is that of Protein Thf1 from Prochlorococcus marinus (strain MIT 9313).